Reading from the N-terminus, the 161-residue chain is 2-C-methyl-D-erythritol 2,4-cyclodiphosphate synthase (161 aa).

The a divalent metal cation site is built by Asp-9 and His-11. Residues 9–11 and 37–38 contribute to the 4-CDP-2-C-methyl-D-erythritol 2-phosphate site; these read DFH and HS. His-45 contributes to the a divalent metal cation binding site. Residues 59 to 61, 64 to 68, 135 to 138, and Arg-145 each bind 4-CDP-2-C-methyl-D-erythritol 2-phosphate; these read DIG, FPDTD, and TTTE.

This sequence belongs to the IspF family. In terms of assembly, homotrimer. The cofactor is a divalent metal cation.

The enzyme catalyses 4-CDP-2-C-methyl-D-erythritol 2-phosphate = 2-C-methyl-D-erythritol 2,4-cyclic diphosphate + CMP. It functions in the pathway isoprenoid biosynthesis; isopentenyl diphosphate biosynthesis via DXP pathway; isopentenyl diphosphate from 1-deoxy-D-xylulose 5-phosphate: step 4/6. Functionally, involved in the biosynthesis of isopentenyl diphosphate (IPP) and dimethylallyl diphosphate (DMAPP), two major building blocks of isoprenoid compounds. Catalyzes the conversion of 4-diphosphocytidyl-2-C-methyl-D-erythritol 2-phosphate (CDP-ME2P) to 2-C-methyl-D-erythritol 2,4-cyclodiphosphate (ME-CPP) with a corresponding release of cytidine 5-monophosphate (CMP). This chain is 2-C-methyl-D-erythritol 2,4-cyclodiphosphate synthase, found in Leptospira borgpetersenii serovar Hardjo-bovis (strain JB197).